We begin with the raw amino-acid sequence, 490 residues long: MTVRESAFVNGRWLAGGGVEFESLDPVTQDCLWKGAAASDDVVGQAVQAARQAFTSWGRLDVSRRIDIVKRFAELLEEDKERLADVIGKETSKPLWEARTEVASMVAKVGISIQAFNERTGVSEQDVAAGHAVLKHRPHGVLAVFGPYNFPGHLPNGHIVPALIAGNTIVFKPSELTPWFAEETVRIWAKAGLPDGVLNLVQGARETGVALAANDGIDGLLFTGSSPTGHSLHRQFGGRPEKILALEMGGNNPLIIAPPYDLKGAVHHTLFSAFVSAGQRCTCARRLLVPDTAEGQAFLDELIAAAANLQVGRYDADPQPFMGGVISLRARDQMLAAQNKLAAEGGRILLEMRSLEENASLLSPGVIDVTDVQELPDEEHFGPMLQVLRYRDFDHALELANKTGFGLAAGLISDSRDLYDRFWLEVRAGIVNWNKPLTGASSAAPFGGVGASGNHRPSAYYAADYCAYPVATLEADQAQAPAQLSPGMSL.

224–229 (GSSPTG) is an NAD(+) binding site. Active-site residues include Glu247 and Cys281.

Belongs to the aldehyde dehydrogenase family. AstD subfamily.

The catalysed reaction is N-succinyl-L-glutamate 5-semialdehyde + NAD(+) + H2O = N-succinyl-L-glutamate + NADH + 2 H(+). It functions in the pathway amino-acid degradation; L-arginine degradation via AST pathway; L-glutamate and succinate from L-arginine: step 4/5. Functionally, catalyzes the NAD-dependent reduction of succinylglutamate semialdehyde into succinylglutamate. This chain is N-succinylglutamate 5-semialdehyde dehydrogenase, found in Hahella chejuensis (strain KCTC 2396).